The sequence spans 446 residues: NAD kinase (446 aa).

Phosphoserine occurs at positions 46, 48, 50, 55, and 64.

Belongs to the NAD kinase family. The cofactor is a divalent metal cation. In terms of tissue distribution, widely expressed but not detected in skeletal muscle.

The catalysed reaction is NAD(+) + ATP = ADP + NADP(+) + H(+). The protein is NAD kinase (NADK) of Homo sapiens (Human).